The following is a 108-amino-acid chain: Insulin-like peptide 17 (108 aa).

A signal peptide spans 1–19 (MFSTRGVLLLLSLMAAVAA).

Belongs to the insulin family. As to expression, expressed in head neurons and the uterus.

It localises to the secreted. In terms of biological role, involved in the regulation of the larval diapause. The polypeptide is Insulin-like peptide 17 (Caenorhabditis elegans).